The chain runs to 256 residues: Small ribosomal subunit protein eS1 (256 aa).

N-acetylalanine; partial is present on Ala2.

It belongs to the eukaryotic ribosomal protein eS1 family. Component of the small ribosomal subunit. Mature ribosomes consist of a small (40S) and a large (60S) subunit. The 40S subunit contains about 33 different proteins and 1 molecule of RNA (18S). The 60S subunit contains about 49 different proteins and 3 molecules of RNA (25S, 5.8S and 5S).

It is found in the cytoplasm. This is Small ribosomal subunit protein eS1 from Eremothecium gossypii (strain ATCC 10895 / CBS 109.51 / FGSC 9923 / NRRL Y-1056) (Yeast).